Here is a 317-residue protein sequence, read N- to C-terminus: uncharacterized protein (317 aa).

The chain crosses the membrane as a helical span at residues 11 to 31 (ALLLVIFGSLIVSFAIFFMVL). 3 consecutive PASTA domains span residues 33–100 (NNEI…FISK), 101–174 (GAII…LISK), and 180–241 (DKHV…TIAK).

Its subcellular location is the membrane. This is an uncharacterized protein from Borreliella burgdorferi (strain ATCC 35210 / DSM 4680 / CIP 102532 / B31) (Borrelia burgdorferi).